The sequence spans 64 residues: Large ribosomal subunit protein uL29 (64 aa).

The protein belongs to the universal ribosomal protein uL29 family.

The sequence is that of Large ribosomal subunit protein uL29 from Thiobacillus denitrificans (strain ATCC 25259 / T1).